The chain runs to 304 residues: L-xylo-3-hexulose reductase (304 aa).

Ile19, Asp68, and Asn107 together coordinate NADP(+). Active-site proton donor residues include Ser163 and Ser164. NADP(+) contacts are provided by Tyr177, Lys181, and Ala209. Tyr177 functions as the Proton acceptor in the catalytic mechanism. Lys181 (lowers pKa of active site Tyr) is an active-site residue.

The protein belongs to the short-chain dehydrogenases/reductases (SDR) family.

It carries out the reaction D-sorbitol + NADP(+) = L-xylo-3-hexulose + NADPH + H(+). Its pathway is carbohydrate degradation. L-xylulose reductase involved in the catabolism of D-galactose through an oxidoreductive pathway. Catalyzes the NADPH-dependent reduction of L-xylo-3-hexulose. Is also active with D-ribulose and L-xylulose, and to a lesser extent with D-xylulose, D-fructose and L- and D-sorbose. In the reverse reaction, shows activity with D-sorbitol and D-mannitol, low activity with xylitol, but no activity with galactitol, ribitol, and L- and D-arabitol. In Hypocrea jecorina (strain QM6a) (Trichoderma reesei), this protein is L-xylo-3-hexulose reductase.